We begin with the raw amino-acid sequence, 82 residues long: Costars family protein v1g158749 (82 aa).

This sequence belongs to the costars family.

This is Costars family protein v1g158749 from Nematostella vectensis (Starlet sea anemone).